Consider the following 231-residue polypeptide: Acyl-protein thioesterase 2 (231 aa).

A lipid anchor (S-palmitoyl cysteine) is attached at Cys2. Position 82 is a phosphoserine (Ser82). Catalysis depends on charge relay system residues Ser122, Asp176, and His210.

It belongs to the AB hydrolase superfamily. AB hydrolase 2 family. In terms of tissue distribution, expressed in various breast cancer cell lines.

The protein resides in the cytoplasm. The catalysed reaction is S-hexadecanoyl-L-cysteinyl-[protein] + H2O = L-cysteinyl-[protein] + hexadecanoate + H(+). It catalyses the reaction prostaglandin E2 1-glyceryl ester + H2O = prostaglandin E2 + glycerol + H(+). The enzyme catalyses 1-hexadecanoyl-sn-glycero-3-phosphocholine + H2O = sn-glycerol 3-phosphocholine + hexadecanoate + H(+). It carries out the reaction 1-octadecanoyl-sn-glycero-3-phosphocholine + H2O = octadecanoate + sn-glycerol 3-phosphocholine + H(+). The catalysed reaction is 1-hexadecanoyl-sn-glycero-3-phosphate + H2O = sn-glycerol 3-phosphate + hexadecanoate + H(+). It catalyses the reaction 1-hexadecanoyl-sn-glycero-3-phospho-L-serine + H2O = sn-glycero-3-phospho-L-serine + hexadecanoate + H(+). Its activity is regulated as follows. Inhibited by compound 1 or (5,5-Dioxido-4H-thieno[3,2-c]thiochromen-2-yl)(4-(4-methoxyphenyl)piperazin-1-yl)methanone. In terms of biological role, acts as an acyl-protein thioesterase hydrolyzing fatty acids from S-acylated cysteine residues in proteins such as trimeric G alpha proteins, GSDMD, GAP43, ZDHHC6 or HRAS. Deacylates GAP43. Mediates depalmitoylation of ZDHHC6. Has lysophospholipase activity. Hydrolyzes prostaglandin glycerol esters (PG-Gs) in the following order prostaglandin D2-glycerol ester (PGD2-G) &gt; prostaglandin E2 glycerol ester (PGE2-G) &gt; prostaglandin F2-alpha-glycerol ester (PGF2-alpha-G). Hydrolyzes 1-arachidonoylglycerol but not 2-arachidonoylglycerol or arachidonoylethanolamide. The sequence is that of Acyl-protein thioesterase 2 (LYPLA2) from Homo sapiens (Human).